The chain runs to 594 residues: Type I restriction enzyme EcoEI specificity subunit (594 aa).

This sequence belongs to the type-I restriction system S methylase family. In terms of assembly, the type I restriction/modification system is composed of three polypeptides R, M and S; the restriction enzyme has stoichiometry R(2)M(2)S(1) while the methyltransferase is M(2)S(1).

Functionally, the specificity (S) subunit of a type I restriction enzyme; this subunit dictates DNA sequence specificity. The M and S subunits together form a methyltransferase (MTase) that methylates two adenine residues of the sequence 5'-GAGN(7)ATGC-3'. In the presence of the R subunit the complex can also act as an endonuclease, binding to the same target sequence but cutting the DNA some distance from this site. Whether the DNA is cut or modified depends on the methylation state of the target sequence. When the target site is unmodified, the DNA is cut. When the target site is hemimethylated, the complex acts as a maintenance MTase modifying the DNA so that both strands become methylated. After locating a non-methylated recognition site, the enzyme complex serves as a molecular motor that translocates DNA in an ATP-dependent manner until a collision occurs that triggers cleavage. The sequence is that of Type I restriction enzyme EcoEI specificity subunit from Escherichia coli.